We begin with the raw amino-acid sequence, 99 residues long: Large ribosomal subunit protein bL27 (99 aa).

The propeptide occupies 1-9; it reads MLLMNLQLF.

This sequence belongs to the bacterial ribosomal protein bL27 family. In terms of processing, the N-terminus is cleaved by ribosomal processing cysteine protease Prp.

The sequence is that of Large ribosomal subunit protein bL27 from Clostridium novyi (strain NT).